A 69-amino-acid chain; its full sequence is DNA gyrase inhibitor YacG (69 aa).

Residues C7, C10, C26, and C30 each coordinate Zn(2+).

It belongs to the DNA gyrase inhibitor YacG family. In terms of assembly, interacts with GyrB. Zn(2+) serves as cofactor.

Its function is as follows. Inhibits all the catalytic activities of DNA gyrase by preventing its interaction with DNA. Acts by binding directly to the C-terminal domain of GyrB, which probably disrupts DNA binding by the gyrase. This Shewanella baltica (strain OS223) protein is DNA gyrase inhibitor YacG.